A 114-amino-acid polypeptide reads, in one-letter code: NADH dehydrogenase [ubiquinone] 1 subunit C2, isoform 2 (114 aa).

A helical transmembrane segment spans residues 56–75 (GLHRQLLYITAFFFAGYYLV).

Belongs to the complex I NDUFC2 subunit family. As to quaternary structure, complex I is composed of 45 different subunits.

The protein localises to the mitochondrion inner membrane. Its function is as follows. Accessory subunit of the mitochondrial membrane respiratory chain NADH dehydrogenase (Complex I), that is believed not to be involved in catalysis. Complex I functions in the transfer of electrons from NADH to the respiratory chain. The immediate electron acceptor for the enzyme is believed to be ubiquinone. This is NADH dehydrogenase [ubiquinone] 1 subunit C2, isoform 2 (NDUFC2-KCTD14) from Homo sapiens (Human).